The primary structure comprises 20 residues: Dihydrolipoamide-residue succinyltransferase component of 2-oxoglutarate dehydrogenase complex (20 aa).

Belongs to the 2-oxoacid dehydrogenase family. As to quaternary structure, forms a 24-polypeptide structural core with octahedral symmetry. (R)-lipoate serves as cofactor.

The protein resides in the mitochondrion membrane. It carries out the reaction N(6)-[(R)-dihydrolipoyl]-L-lysyl-[protein] + succinyl-CoA = N(6)-[(R)-S(8)-succinyldihydrolipoyl]-L-lysyl-[protein] + CoA. It participates in amino-acid degradation; L-lysine degradation via saccharopine pathway; glutaryl-CoA from L-lysine: step 6/6. Its function is as follows. The 2-oxoglutarate dehydrogenase complex catalyzes the overall conversion of 2-oxoglutarate to succinyl-CoA and CO(2). It contains multiple copies of three enzymatic components: 2-oxoglutarate dehydrogenase (E1), dihydrolipoamide succinyltransferase (E2) and lipoamide dehydrogenase (E3). This is Dihydrolipoamide-residue succinyltransferase component of 2-oxoglutarate dehydrogenase complex from Solanum tuberosum (Potato).